A 516-amino-acid chain; its full sequence is Probable cyclic di-GMP phosphodiesterase PdeB (516 aa).

A run of 2 helical transmembrane segments spans residues 6-26 (LVGL…GLSI) and 242-262 (QVFI…MFVL). Positions 268 to 516 (IQSPHHRLQD…DFLRWAEQHL (249 aa)) constitute an EAL domain.

Its subcellular location is the cell inner membrane. The enzyme catalyses 3',3'-c-di-GMP + H2O = 5'-phosphoguanylyl(3'-&gt;5')guanosine + H(+). In terms of biological role, phosphodiesterase (PDE) that catalyzes the hydrolysis of cyclic-di-GMP (c-di-GMP) to 5'-pGpG. The chain is Probable cyclic di-GMP phosphodiesterase PdeB from Escherichia coli (strain K12).